The chain runs to 321 residues: tRNA uridine(34) hydroxylase (321 aa).

The 99-residue stretch at 135–233 folds into the Rhodanese domain; it reads DDPLTLVIDT…YLEEVPENES (99 aa). The active-site Cysteine persulfide intermediate is cysteine 193.

It belongs to the TrhO family.

The catalysed reaction is uridine(34) in tRNA + AH2 + O2 = 5-hydroxyuridine(34) in tRNA + A + H2O. Functionally, catalyzes oxygen-dependent 5-hydroxyuridine (ho5U) modification at position 34 in tRNAs. This chain is tRNA uridine(34) hydroxylase, found in Prochlorococcus marinus (strain SARG / CCMP1375 / SS120).